The sequence spans 609 residues: MITVIKWLVSGCCALAAVTTRAPLPKDCRNTPNSRGCWKDGFDILTDYTDPKRAPPGKLVEYNLTVSQQVIAPDGYEKLGMVANGQFPGPTIEADWGDTIRISVYNNFTDNNNGSAIHWHGLRQFENNVQDGVPGVTQCPSKPGETQVYEFRATQYGTSWYHSHFSLQCECPLNGLFGPIVIHGPSSMDWDEDLGPWLLHDWYHDDVFSLLWVGETKNRGAIPESTILNGKGKFDCNHHNDTRCTGTGGEYFEVNFRKGVRYKFTIANTGTLLEYMFWIDGHNLTVIAADFVPIEPYVTDVVNVAMGQRYEIIVEANADFTHGSNFWIYAQYCDEVDLLPHKAVGIVRYDEQDRQDPRTPPLSDQHRDFGCEDPDLDNLVPVVQQSVGRRVNRMEMKDYLRMGQEGYPDPMNFDGDLHKWVLGDVPMFVDWKNPSLKKLAVDEHPDFPPETVPILLDFDTGDWVHFVITNNYTFEKVHFPRNLTPVMHPMHLHGHDFAILAQGRGEFDPSIVPKLDNPPRRDVVNVDTGSYVWIAFQVNNPGAWLLHCHIAFHVSSGLSLQFIEQPKKVKPLMEAAGVLGEFHDRCAKWTEYYDSVNIPDNHTIDDSGI.

Positions 1–16 (MITVIKWLVSGCCALA) are cleaved as a signal peptide. N-linked (GlcNAc...) asparagine glycans are attached at residues Asn-63, Asn-107, Asn-113, Asn-240, Asn-283, Asn-471, and Asn-601. Plastocyanin-like domains lie at 66 to 186 (VSQQ…HGPS), 196 to 351 (PWLL…RYDE), and 429 to 567 (VDWK…EQPK).

The protein belongs to the multicopper oxidase family. Specifically expressed in conidia.

It functions in the pathway secondary metabolite biosynthesis. Its function is as follows. Oxidoreductase; part of the gene cluster that mediates the biosynthesis of trypacidin, a mycotoxin with antiprotozoal activity and that plays a role in the infection process. The pathway begins with the synthesis of atrochrysone thioester by the polyketide synthase (PKS) tpcC. The atrochrysone carboxyl ACP thioesterase tpcB then breaks the thioester bond and releases the atrochrysone carboxylic acid from tpcC. The decarboxylase tpcK converts atrochrysone carboxylic acid to atrochrysone which is further reduced into emodin anthrone. The next step is performed by the emodin anthrone oxygenase tpcL that catalyzes the oxidation of emodinanthrone to emodin. Emodin O-methyltransferase encoded by tpcA catalyzes methylation of the 8-hydroxy group of emodin to form questin. Ring cleavage of questin by questin oxidase tpcI leads to desmethylsulochrin via several intermediates including questin epoxide. Another methylation step catalyzed by tpcM leads to the formation of sulochrin which is further converted to monomethylsulfochrin by tpcH. Finally, the tpcJ catalyzes the conversion of monomethylsulfochrin to trypacidin. Trypacidin is toxic for human pulmonary and bronchial epithelial cells by initiating the intracellular formation of nitric oxide (NO) and hydrogen peroxide (H(2)O(2)), thus triggering host necrotic cell death. The trypacidin pathway is also able to produce endocrocin via a distinct route from the endocrocin Enc pathway. The protein is Oxidoreductase tpcJ of Aspergillus fumigatus (strain ATCC MYA-4609 / CBS 101355 / FGSC A1100 / Af293) (Neosartorya fumigata).